We begin with the raw amino-acid sequence, 426 residues long: Adenylosuccinate synthetase (426 aa).

GTP is bound by residues 14 to 20 (GDEGKGK) and 42 to 44 (GHT). Asp15 functions as the Proton acceptor in the catalytic mechanism. Residues Asp15 and Gly42 each contribute to the Mg(2+) site. Residues 15–18 (DEGK), 40–43 (NAGH), Thr130, Arg144, Gln224, Thr239, and Arg303 each bind IMP. The Proton donor role is filled by His43. Residue 299–305 (TVTKRPR) participates in substrate binding. GTP contacts are provided by residues Arg305, 331 to 333 (LID), and 413 to 415 (SVG).

The protein belongs to the adenylosuccinate synthetase family. In terms of assembly, homodimer. Requires Mg(2+) as cofactor.

The protein resides in the cytoplasm. It catalyses the reaction IMP + L-aspartate + GTP = N(6)-(1,2-dicarboxyethyl)-AMP + GDP + phosphate + 2 H(+). It participates in purine metabolism; AMP biosynthesis via de novo pathway; AMP from IMP: step 1/2. Its function is as follows. Plays an important role in the de novo pathway of purine nucleotide biosynthesis. Catalyzes the first committed step in the biosynthesis of AMP from IMP. In Malacoplasma penetrans (strain HF-2) (Mycoplasma penetrans), this protein is Adenylosuccinate synthetase.